The chain runs to 353 residues: Biotin synthase (353 aa).

In terms of domain architecture, Radical SAM core spans 51–270 (NEVQCNQLLN…IALARIMMPK (220 aa)). 3 residues coordinate [4Fe-4S] cluster: cysteine 66, cysteine 70, and cysteine 73. [2Fe-2S] cluster is bound by residues cysteine 110, cysteine 141, cysteine 201, and arginine 274. A disordered region spans residues 330 to 353 (APVEAHSHDHDHDHHDHHHGHSHS). Residues 334 to 343 (AHSHDHDHDH) are compositionally biased toward basic and acidic residues. Residues 344–353 (HDHHHGHSHS) show a composition bias toward basic residues.

It belongs to the radical SAM superfamily. Biotin synthase family. Homodimer. The cofactor is [4Fe-4S] cluster. It depends on [2Fe-2S] cluster as a cofactor.

The enzyme catalyses (4R,5S)-dethiobiotin + (sulfur carrier)-SH + 2 reduced [2Fe-2S]-[ferredoxin] + 2 S-adenosyl-L-methionine = (sulfur carrier)-H + biotin + 2 5'-deoxyadenosine + 2 L-methionine + 2 oxidized [2Fe-2S]-[ferredoxin]. It functions in the pathway cofactor biosynthesis; biotin biosynthesis; biotin from 7,8-diaminononanoate: step 2/2. Functionally, catalyzes the conversion of dethiobiotin (DTB) to biotin by the insertion of a sulfur atom into dethiobiotin via a radical-based mechanism. This is Biotin synthase from Rhodopseudomonas palustris (strain HaA2).